The chain runs to 802 residues: Oligophrenin-1 (802 aa).

The PH domain maps to 265-368; sequence QPTIEGYLYT…WMEAMDGKEP (104 aa). A Rho-GAP domain is found at 380 to 564; it reads MELNEVGFKF…ILIEHFGKIY (185 aa). Disordered regions lie at residues 641–663 and 682–802; these read QKSG…CQTE and TKAI…GDES. Basic and acidic residues predominate over residues 716–732; that stretch reads HHKEGDTDCFSKVRPPG. The span at 751-768 shows a compositional bias: polar residues; that stretch reads SSTSQKPESKPETVSSNA.

In terms of assembly, interacts with HOMER1. Interacts with AMPA receptor complexes. Interacts with SH3GL2 (endophilin-A1). Interacts (via C-terminus) with NR1D1. In terms of tissue distribution, high expression in brain, particularly in the cerebellum, hippocampus, thalamus, frontal lobes, sensory cortex. Found in the myelin sheaths of peripheral nerves, chromaffin cells within the adrenal medulla, and in extra-adrenal chromaffin cells associated with celiac ganglia.

It localises to the postsynapse. The protein resides in the presynapse. It is found in the cell projection. Its subcellular location is the axon. The protein localises to the dendritic spine. It localises to the dendrite. The protein resides in the cytoplasm. Functionally, stimulates GTP hydrolysis of members of the Rho family. Its action on RHOA activity and signaling is implicated in growth and stabilization of dendritic spines, and therefore in synaptic function, in hippocampal neurons. Critical for the stabilization of AMPA receptors at postsynaptic sites. Critical for the regulation of synaptic vesicle endocytosis at pre-synaptic terminals. Required for the localization of NR1D1 to dendrites, can suppress its repressor activity and protect it from proteasomal degradation. The sequence is that of Oligophrenin-1 (Ophn1) from Rattus norvegicus (Rat).